A 115-amino-acid polypeptide reads, in one-letter code: Parathyroid hormone (115 aa).

An N-terminal signal peptide occupies residues 1–25 (MMSAKDMVKVMIVMLAICFLARSDG). The propeptide occupies 26–31 (KSVKKR). An important for receptor binding region spans residues 51–69 (RVEWLRKKLQDVHNFVALG). Positions 77 to 99 (GSSQRPRKKEDNVLVESHQKSLG) are disordered. The span at 84–99 (KKEDNVLVESHQKSLG) shows a compositional bias: basic and acidic residues.

The protein belongs to the parathyroid hormone family. Interacts with PTH1R (via N-terminal extracellular domain).

It is found in the secreted. Its function is as follows. Parathyroid hormone elevates calcium level by dissolving the salts in bone and preventing their renal excretion. Acts by binding to its receptor, PTH1R, activating G protein-coupled receptor signaling. Stimulates [1-14C]-2-deoxy-D-glucose (2DG) transport and glycogen synthesis in osteoblastic cells. The chain is Parathyroid hormone from Bos taurus (Bovine).